A 153-amino-acid chain; its full sequence is 3-hydroxyacyl-[acyl-carrier-protein] dehydratase FabZ (153 aa).

His57 is a catalytic residue.

Belongs to the thioester dehydratase family. FabZ subfamily.

It localises to the cytoplasm. The enzyme catalyses a (3R)-hydroxyacyl-[ACP] = a (2E)-enoyl-[ACP] + H2O. Functionally, involved in unsaturated fatty acids biosynthesis. Catalyzes the dehydration of short chain beta-hydroxyacyl-ACPs and long chain saturated and unsaturated beta-hydroxyacyl-ACPs. In Aeromonas hydrophila subsp. hydrophila (strain ATCC 7966 / DSM 30187 / BCRC 13018 / CCUG 14551 / JCM 1027 / KCTC 2358 / NCIMB 9240 / NCTC 8049), this protein is 3-hydroxyacyl-[acyl-carrier-protein] dehydratase FabZ.